A 359-amino-acid chain; its full sequence is Protein-arginine kinase (359 aa).

Residues I25–L257 enclose the Phosphagen kinase C-terminal domain. ATP is bound by residues S28–R32, H93, R128, R179–M183, and R210–E215. Residues R340–A345 carry the RDXXRA motif of the pArg binding pocket involved in allosteric regulation motif.

Belongs to the ATP:guanido phosphotransferase family.

It catalyses the reaction L-arginyl-[protein] + ATP = N(omega)-phospho-L-arginyl-[protein] + ADP + H(+). Its activity is regulated as follows. Appears to be allosterically activated by the binding of pArg-containing polypeptides to the pArg-binding pocket localized in the C-terminal domain of McsB. Catalyzes the specific phosphorylation of arginine residues in proteins. In Syntrophomonas wolfei subsp. wolfei (strain DSM 2245B / Goettingen), this protein is Protein-arginine kinase.